Reading from the N-terminus, the 151-residue chain is Large ribosomal subunit protein bL9 (151 aa).

Belongs to the bacterial ribosomal protein bL9 family.

In terms of biological role, binds to the 23S rRNA. This is Large ribosomal subunit protein bL9 from Chlorobium limicola (strain DSM 245 / NBRC 103803 / 6330).